We begin with the raw amino-acid sequence, 457 residues long: Chromosomal replication initiator protein DnaA (457 aa).

The interval 1–81 (MERDLSQLWQ…NNTDLVIKVQ (81 aa)) is domain I, interacts with DnaA modulators. The tract at residues 81–119 (QEGSKPAARKVVAQQEIANTPVQHSAPMPENEPQAAFRS) is domain II. Residues 120–337 (NLNQHHLFEN…GALNRVHANA (218 aa)) are domain III, AAA+ region. 4 residues coordinate ATP: Gly-165, Gly-167, Lys-168, and Thr-169. A domain IV, binds dsDNA region spans residues 338–457 (DFTGKAITID…WSNLIRTLSA (120 aa)).

The protein belongs to the DnaA family. In terms of assembly, oligomerizes as a right-handed, spiral filament on DNA at oriC.

Its subcellular location is the cytoplasm. Its function is as follows. Plays an essential role in the initiation and regulation of chromosomal replication. ATP-DnaA binds to the origin of replication (oriC) to initiate formation of the DNA replication initiation complex once per cell cycle. Binds the DnaA box (a 9 base pair repeat at the origin) and separates the double-stranded (ds)DNA. Forms a right-handed helical filament on oriC DNA; dsDNA binds to the exterior of the filament while single-stranded (ss)DNA is stabiized in the filament's interior. The ATP-DnaA-oriC complex binds and stabilizes one strand of the AT-rich DNA unwinding element (DUE), permitting loading of DNA polymerase. After initiation quickly degrades to an ADP-DnaA complex that is not apt for DNA replication. Binds acidic phospholipids. This chain is Chromosomal replication initiator protein DnaA, found in Mannheimia succiniciproducens (strain KCTC 0769BP / MBEL55E).